Consider the following 379-residue polypeptide: F-box/kelch-repeat protein At4g33900 (379 aa).

The region spanning isoleucine 9–arginine 55 is the F-box domain. Kelch repeat units follow at residues glutamate 116–glycine 175, arginine 176–serine 222, and serine 262–lysine 308.

The polypeptide is F-box/kelch-repeat protein At4g33900 (Arabidopsis thaliana (Mouse-ear cress)).